Consider the following 1058-residue polypeptide: MAIKKKKKETKSKDNNNDNLRNEKKSTNLENGKYDKKKVEIYEHGIGGITQNKNDNNKENAYDDDIYHDKSEHINVKYLNEKDYEIEKVSKRIYEENSKIKKISLHHKILKEELETKQLIEQNDKKKKNSLDYYKKVIIKLKNNINNMEEYTNNITNDINVLKAHIDDERNERIIYNNNMKILINEYNSLKKNIQDLNMQEKEQHKFNTKLKEELKELYKEKENMEKKHREDFKKLQQKIKEQKILSYENKINDLTKEKDKNKMENGEANKYEDKHNNNNIHNNNNIHNDNNICNDNNICNDNTIHNDNNICNDNNICNDNNICNDNNICNDNNIRNNNIISSNNKIHEKDNMINILNYYEDEKKKQLQNKIVMLKKLCLRILFINEYQIYNIKKLQENINNMNNAINSINLISYKKGDFDHIIINLNVSKEKNYSLISRINLLNYETNVLKQLIKKMKEKFKHLNLQNDEIINLKYDISNNMNEKMKHIKTSLLTNQETCNLKKKCFDDCLLYLKQLYTFIKNYENNNDKLNIKSQIINKDKNLHFNYIHKYNEDILVDENYINDFLIYIEKYIYSLNFYLPTQNFNYKKYLLHNGSIHNITLDTHASSKEYLQKEDSSEFNQHGHNLLRDSLNLNEQQENKDHLQHEEHTHEEEPKDANGDMVNIEDANGDMVNIEDANGDMVNIKDANGDMVNIKDTRGDIENIEDKSGDMENMKEPNGDMENMKEPNDDIQILKEPNDDIQILKEPNDDIQILKEPNDDIQILKEPNDDIQILKEPNDDIQILKEPNDDIQILKDPNDDIQILKEPNDDISTINNLTTHLSNENNLMTDLPKVDHKIKDEIQSEHILESTNISDDNINKENSLEIPLNYDHTQENILKNKNNMEDQNNLLEQNIMTDQLQNHKECEEFKPHDNKEKNNIINDDTKNLISDDTKNIISDDTKNIISNDTKKILSDDTKNIISDDTKNIINDDTKNISNDDIKNISNDDIKNIGNDNNKPYNEDHNIVTINDEKANYILNHFNSRNIEYDKLKEEIPNELLNIKYDSSKKSTISTN.

Positions 1-10 (MAIKKKKKET) are enriched in basic residues. The tract at residues 1–34 (MAIKKKKKETKSKDNNNDNLRNEKKSTNLENGKY) is disordered. A compositionally biased stretch (basic and acidic residues) spans 11-34 (KSKDNNNDNLRNEKKSTNLENGKY). Residues 515–544 (LKQLYTFIKNYENNNDKLNIKSQIINKDKN) adopt a coiled-coil conformation. Basic and acidic residues predominate over residues 641–661 (ENKDHLQHEEHTHEEEPKDAN). Disordered regions lie at residues 641–665 (ENKD…GDMV) and 706–728 (NIED…ENMK). Positions 872-905 (NYDHTQENILKNKNNMEDQNNLLEQNIMTDQLQN) form a coiled coil.

The chain is Leucine-rich repeat and coiled-coil domain-containing protein PF3D7_0703800 from Plasmodium falciparum (isolate 3D7).